Here is an 834-residue protein sequence, read N- to C-terminus: RNA-binding protein 12B-B (834 aa).

In terms of domain architecture, RRM 1 spans 154–229 (PYLFLRGLPY…RFIEVMQGSE (76 aa)). The interval 237–277 (GTATEGGDTPRMRSEEHSPSRRINGRHFRKRSHSKSPRARS) is disordered. Residues 244–255 (DTPRMRSEEHSP) show a composition bias toward basic and acidic residues. Residues 259-277 (INGRHFRKRSHSKSPRARS) show a composition bias toward basic residues. 2 RRM domains span residues 283 to 359 (FYVH…PVSR) and 401 to 478 (LCIY…LISE). 2 disordered regions span residues 546–572 (GYFR…PWEE) and 621–643 (HFRR…RSRE). A compositionally biased stretch (basic and acidic residues) spans 550–572 (QSDRCSPEDFRHSPEDYRHPWEE). S701 is modified (phosphoserine). In terms of domain architecture, RRM 4 spans 758–834 (IRVMISNLPF…GPRKVKLSLL (77 aa)).

This is RNA-binding protein 12B-B (Rbm12b2) from Mus musculus (Mouse).